The sequence spans 59 residues: UPF0181 protein YoaH (59 aa).

The protein belongs to the UPF0181 family.

This Shigella sonnei (strain Ss046) protein is UPF0181 protein YoaH.